Here is a 194-residue protein sequence, read N- to C-terminus: SRP-independent targeting protein 3 homolog (194 aa).

2 helical membrane-spanning segments follow: residues 43 to 63 (ILYA…KIII) and 110 to 130 (LVTI…PPLL).

The protein belongs to the PHO88 family.

The protein resides in the endoplasmic reticulum membrane. May function in a SRP (signal recognition particle) and GET (guided entry of tail-anchored proteins) independent pathway for targeting a broad range of substrate proteins to the endoplasmic reticulum. Involved in inorganic phosphate uptake. Also involved in telomere length regulation and maintenance. This Schizosaccharomyces pombe (strain 972 / ATCC 24843) (Fission yeast) protein is SRP-independent targeting protein 3 homolog.